The following is a 192-amino-acid chain: NF-kappa-B inhibitor-interacting Ras-like protein 1 (192 aa).

11–18 is a GTP binding site; it reads GLLSVGKT. The Effector region signature appears at 35–43; the sequence is DCETLEDVY. Residues 58 to 93 are interactions with NFKBIA and NFKBIB; it reads HLYDTRGLQKGVELPKHYFSFADGFVLVYSVNNLES. GTP is bound by residues 61–65 and 120–123; these read DTRGL and NKLD. Positions 168–192 are disordered; it reads LSQPQSKSSFPLPGRKNKGNSNPEN.

The protein belongs to the small GTPase superfamily. Ras family. KappaB-Ras subfamily. As to quaternary structure, interacts with both NF-kappa-B inhibitor alpha (NFKBIA) and beta (NFKBIB) in vitro. However, it probably only interacts with NFKBIB in vivo. Forms a complex with NFKBIB and NF-kappa-B heterodimer (p50/NFKB1 and p65/RELA). Also interacts with c-Rel (REL).

The protein resides in the cytoplasm. In terms of biological role, atypical Ras-like protein that acts as a potent regulator of NF-kappa-B activity by preventing the degradation of NF-kappa-B inhibitor beta (NFKBIB) by most signals, explaining why NFKBIB is more resistant to degradation. May act by blocking phosphorylation of NFKBIB and mediating cytoplasmic retention of p65/RELA NF-kappa-B subunit. It is unclear whether it acts as a GTPase. Both GTP- and GDP-bound forms block phosphorylation of NFKBIB. This is NF-kappa-B inhibitor-interacting Ras-like protein 1 (Nkiras1) from Mus musculus (Mouse).